Consider the following 317-residue polypeptide: Ferrochelatase (317 aa).

Positions 187 and 268 each coordinate Fe cation.

This sequence belongs to the ferrochelatase family.

The protein resides in the cytoplasm. The enzyme catalyses heme b + 2 H(+) = protoporphyrin IX + Fe(2+). The protein operates within porphyrin-containing compound metabolism; protoheme biosynthesis; protoheme from protoporphyrin-IX: step 1/1. In terms of biological role, catalyzes the ferrous insertion into protoporphyrin IX. The chain is Ferrochelatase from Campylobacter concisus (strain 13826).